The primary structure comprises 184 residues: NADH-quinone oxidoreductase subunit B (184 aa).

Residues C37, C38, C103, and C132 each contribute to the [4Fe-4S] cluster site.

The protein belongs to the complex I 20 kDa subunit family. In terms of assembly, NDH-1 is composed of 14 different subunits. Subunits NuoB, C, D, E, F, and G constitute the peripheral sector of the complex. It depends on [4Fe-4S] cluster as a cofactor.

Its subcellular location is the cell membrane. The enzyme catalyses a quinone + NADH + 5 H(+)(in) = a quinol + NAD(+) + 4 H(+)(out). In terms of biological role, NDH-1 shuttles electrons from NADH, via FMN and iron-sulfur (Fe-S) centers, to quinones in the respiratory chain. The immediate electron acceptor for the enzyme in this species is believed to be a menaquinone. Couples the redox reaction to proton translocation (for every two electrons transferred, four hydrogen ions are translocated across the cytoplasmic membrane), and thus conserves the redox energy in a proton gradient. This Mycobacterium bovis (strain BCG / Pasteur 1173P2) protein is NADH-quinone oxidoreductase subunit B.